We begin with the raw amino-acid sequence, 303 residues long: tRNA pseudouridine synthase B (303 aa).

The active-site Nucleophile is D47.

This sequence belongs to the pseudouridine synthase TruB family. Type 1 subfamily.

The enzyme catalyses uridine(55) in tRNA = pseudouridine(55) in tRNA. Responsible for synthesis of pseudouridine from uracil-55 in the psi GC loop of transfer RNAs. The sequence is that of tRNA pseudouridine synthase B from Legionella pneumophila subsp. pneumophila (strain Philadelphia 1 / ATCC 33152 / DSM 7513).